The sequence spans 879 residues: Phosphoenolpyruvate carboxylase (879 aa).

Active-site residues include H138 and K545.

Belongs to the PEPCase type 1 family. The cofactor is Mg(2+).

The enzyme catalyses oxaloacetate + phosphate = phosphoenolpyruvate + hydrogencarbonate. Forms oxaloacetate, a four-carbon dicarboxylic acid source for the tricarboxylic acid cycle. In Haemophilus influenzae (strain PittEE), this protein is Phosphoenolpyruvate carboxylase.